A 131-amino-acid polypeptide reads, in one-letter code: Cystatin-like cysteine protease inhibitor EPIC3 (131 aa).

Positions 1-20 are cleaved as a signal peptide; the sequence is MAFTRSIALFAGLALAASSA. A glycan (N-linked (GlcNAc...) asparagine) is linked at N33. Residues 71-75 carry the Secondary area of contact motif; sequence QTVAG.

The protein belongs to the cystatin family.

The protein localises to the secreted. In terms of biological role, secreted effector that interacts with and inhibits host apoplastic pathogenesis-related papain-like cysteine proteases. Inhibition of host proteases by a pathogen extracellular protease inhibitor forms a specific type of defense-counterdefense mechanism between plants and microbial pathogens. This is Cystatin-like cysteine protease inhibitor EPIC3 from Phytophthora infestans (Potato late blight agent).